A 197-amino-acid polypeptide reads, in one-letter code: MSDIFVYPCAGRIAGVDEVGRGPLVGAVVTAAVILDPARPIAGLADSKKLSEKRRNALYDEIVEKALCWSLGRAEAEEIDRLNILQATMVAMQRAVAGLARQPDFVLIDGNRCPALPMAAQAVVKGDSRVAEISAASILAKVTRDREMAALDRQYPEYGFARHKGYPTALHLERLAALGATEHHRRSFGPVKRVLGL.

The region spanning 11-197 (GRIAGVDEVG…FGPVKRVLGL (187 aa)) is the RNase H type-2 domain. A divalent metal cation is bound by residues Asp-17, Glu-18, and Asp-109.

It belongs to the RNase HII family. It depends on Mn(2+) as a cofactor. Requires Mg(2+) as cofactor.

It localises to the cytoplasm. It carries out the reaction Endonucleolytic cleavage to 5'-phosphomonoester.. Its function is as follows. Endonuclease that specifically degrades the RNA of RNA-DNA hybrids. This chain is Ribonuclease HII, found in Edwardsiella ictaluri (strain 93-146).